A 286-amino-acid polypeptide reads, in one-letter code: Ribosomal RNA small subunit methyltransferase A (286 aa).

The S-adenosyl-L-methionine site is built by Asn28, Leu30, Gly55, Glu77, Asp103, and Asn123.

This sequence belongs to the class I-like SAM-binding methyltransferase superfamily. rRNA adenine N(6)-methyltransferase family. RsmA subfamily.

It is found in the cytoplasm. It catalyses the reaction adenosine(1518)/adenosine(1519) in 16S rRNA + 4 S-adenosyl-L-methionine = N(6)-dimethyladenosine(1518)/N(6)-dimethyladenosine(1519) in 16S rRNA + 4 S-adenosyl-L-homocysteine + 4 H(+). In terms of biological role, specifically dimethylates two adjacent adenosines (A1518 and A1519) in the loop of a conserved hairpin near the 3'-end of 16S rRNA in the 30S particle. May play a critical role in biogenesis of 30S subunits. The sequence is that of Ribosomal RNA small subunit methyltransferase A from Bradyrhizobium sp. (strain BTAi1 / ATCC BAA-1182).